The sequence spans 335 residues: Biotin synthase (335 aa).

Residues 39-267 (TKIQVCKLIS…ASDVRLSAGR (229 aa)) enclose the Radical SAM core domain. Residues Cys54, Cys58, and Cys61 each coordinate [4Fe-4S] cluster. [2Fe-2S] cluster contacts are provided by Cys98, Cys130, Cys190, and Arg262.

The protein belongs to the radical SAM superfamily. Biotin synthase family. Homodimer. It depends on [4Fe-4S] cluster as a cofactor. The cofactor is [2Fe-2S] cluster.

It catalyses the reaction (4R,5S)-dethiobiotin + (sulfur carrier)-SH + 2 reduced [2Fe-2S]-[ferredoxin] + 2 S-adenosyl-L-methionine = (sulfur carrier)-H + biotin + 2 5'-deoxyadenosine + 2 L-methionine + 2 oxidized [2Fe-2S]-[ferredoxin]. Its pathway is cofactor biosynthesis; biotin biosynthesis; biotin from 7,8-diaminononanoate: step 2/2. Catalyzes the conversion of dethiobiotin (DTB) to biotin by the insertion of a sulfur atom into dethiobiotin via a radical-based mechanism. The chain is Biotin synthase from Nostoc punctiforme (strain ATCC 29133 / PCC 73102).